Reading from the N-terminus, the 213-residue chain is Uridine kinase (213 aa).

14–21 (GASASGKS) provides a ligand contact to ATP.

Belongs to the uridine kinase family.

The protein resides in the cytoplasm. The enzyme catalyses uridine + ATP = UMP + ADP + H(+). The catalysed reaction is cytidine + ATP = CMP + ADP + H(+). It participates in pyrimidine metabolism; CTP biosynthesis via salvage pathway; CTP from cytidine: step 1/3. The protein operates within pyrimidine metabolism; UMP biosynthesis via salvage pathway; UMP from uridine: step 1/1. The protein is Uridine kinase of Vibrio campbellii (strain ATCC BAA-1116).